Reading from the N-terminus, the 637-residue chain is Threonine--tRNA ligase (637 aa).

A TGS domain is found at 1–61; sequence MLNITLPDGS…VEDSAVQIIT (61 aa). Positions 242 to 533 are catalytic; the sequence is DHRKLGKQLD…LIENHAGSFP (292 aa). Residues Cys-333, His-384, and His-510 each contribute to the Zn(2+) site.

This sequence belongs to the class-II aminoacyl-tRNA synthetase family. As to quaternary structure, homodimer. Requires Zn(2+) as cofactor.

Its subcellular location is the cytoplasm. It carries out the reaction tRNA(Thr) + L-threonine + ATP = L-threonyl-tRNA(Thr) + AMP + diphosphate + H(+). In terms of biological role, catalyzes the attachment of threonine to tRNA(Thr) in a two-step reaction: L-threonine is first activated by ATP to form Thr-AMP and then transferred to the acceptor end of tRNA(Thr). Also edits incorrectly charged L-seryl-tRNA(Thr). This chain is Threonine--tRNA ligase, found in Neisseria meningitidis serogroup A / serotype 4A (strain DSM 15465 / Z2491).